The chain runs to 467 residues: 55 kDa erythrocyte membrane protein (467 aa).

Positions 73 to 154 (EVAFEKNQSE…VVTMKIIPRP (82 aa)) constitute a PDZ domain. The SH3 domain maps to 160 to 230 (PCEMYMRGQF…PSPELQEWRA (71 aa)). A Guanylate kinase-like domain is found at 283 to 452 (RKTLVLIGAP…SVKIVEEALE (170 aa)).

The protein belongs to the MAGUK family. Extensively palmitoylated.

Its subcellular location is the membrane. In terms of biological role, may play a role in the regulation of neutrophil polarization. The protein is 55 kDa erythrocyte membrane protein (mpp1) of Takifugu rubripes (Japanese pufferfish).